A 376-amino-acid polypeptide reads, in one-letter code: Dihydroorotate dehydrogenase (quinone) (376 aa).

FMN-binding positions include 78 to 82 (AGFDK) and threonine 102. Lysine 82 contributes to the substrate binding site. 127-131 (NRMGF) contacts substrate. Positions 157 and 190 each coordinate FMN. Asparagine 190 contacts substrate. The Nucleophile role is filled by serine 193. Substrate is bound at residue asparagine 195. Residues lysine 228 and threonine 256 each contribute to the FMN site. A substrate-binding site is contributed by 257–258 (NT). FMN contacts are provided by residues glycine 286, glycine 315, and 336–337 (YT).

This sequence belongs to the dihydroorotate dehydrogenase family. Type 2 subfamily. As to quaternary structure, monomer. Requires FMN as cofactor.

The protein localises to the cell membrane. The catalysed reaction is (S)-dihydroorotate + a quinone = orotate + a quinol. It participates in pyrimidine metabolism; UMP biosynthesis via de novo pathway; orotate from (S)-dihydroorotate (quinone route): step 1/1. Functionally, catalyzes the conversion of dihydroorotate to orotate with quinone as electron acceptor. This is Dihydroorotate dehydrogenase (quinone) from Nostoc sp. (strain PCC 7120 / SAG 25.82 / UTEX 2576).